A 686-amino-acid polypeptide reads, in one-letter code: Epsin (686 aa).

The ENTH domain maps to 14–145 (DAVLNTPEIE…QDDQRIKEER (132 aa)). Disordered regions lie at residues 177–417 (YDSD…FNNN) and 463–571 (NSSM…TMRP). Residues 185-211 (NQRDSYGGNQRDSYGGNQRDSYGGNQR) show a composition bias toward polar residues. A compositionally biased stretch (basic and acidic residues) spans 212-225 (ETTRRDSFNGRDEG). Residues 237 to 256 (SYDSDPYSNTRAEYENYSNR) are compositionally biased toward polar residues. Low complexity-rich tracts occupy residues 269–340 (SNNS…SGPS) and 383–417 (NNTN…FNNN). The segment covering 491–503 (FDQQSGDFSNKND) has biased composition (polar residues). Over residues 504-521 (GQQKPKDTNDPWSKKDLF) the composition is skewed to basic and acidic residues. Over residues 527 to 547 (GNQNPNQSPVNNTNNNNNGNT) the composition is skewed to low complexity. Residues 558-567 (PITSAGSTIP) show a composition bias toward polar residues.

This sequence belongs to the epsin family.

It is found in the membrane. Its subcellular location is the clathrin-coated pit. In terms of biological role, binds to membranes enriched in phosphatidylinositol 4,5-bisphosphate (PtdIns(4,5)P2). The sequence is that of Epsin (epnA) from Dictyostelium discoideum (Social amoeba).